The primary structure comprises 75 residues: ATP synthase subunit c (75 aa).

2 consecutive transmembrane segments (helical) span residues 8-28 and 54-74; these read FLGIGLSVVGMLGAAIGVSNI and AALTEAMGLFSFVLALLLIFV.

It belongs to the ATPase C chain family. In terms of assembly, F-type ATPases have 2 components, F(1) - the catalytic core - and F(0) - the membrane proton channel. F(1) has five subunits: alpha(3), beta(3), gamma(1), delta(1), epsilon(1). F(0) has three main subunits: a(1), b(2) and c(10-14). The alpha and beta chains form an alternating ring which encloses part of the gamma chain. F(1) is attached to F(0) by a central stalk formed by the gamma and epsilon chains, while a peripheral stalk is formed by the delta and b chains.

It is found in the cell inner membrane. Functionally, f(1)F(0) ATP synthase produces ATP from ADP in the presence of a proton or sodium gradient. F-type ATPases consist of two structural domains, F(1) containing the extramembraneous catalytic core and F(0) containing the membrane proton channel, linked together by a central stalk and a peripheral stalk. During catalysis, ATP synthesis in the catalytic domain of F(1) is coupled via a rotary mechanism of the central stalk subunits to proton translocation. In terms of biological role, key component of the F(0) channel; it plays a direct role in translocation across the membrane. A homomeric c-ring of between 10-14 subunits forms the central stalk rotor element with the F(1) delta and epsilon subunits. The sequence is that of ATP synthase subunit c from Neorickettsia sennetsu (strain ATCC VR-367 / Miyayama) (Ehrlichia sennetsu).